The chain runs to 629 residues: Translation initiation factor IF-2 (629 aa).

Positions 1-20 (MAKNIKTNKKPQQVNKKEMS) are disordered. One can recognise a tr-type G domain in the interval 127 to 297 (HRAPIVTIMG…LLIAEMQDYK (171 aa)). Positions 136–143 (GHVDHGKT) are G1. 136 to 143 (GHVDHGKT) serves as a coordination point for GTP. The G2 stretch occupies residues 161 to 165 (GITQA). A G3 region spans residues 183 to 186 (DTPG). Residues 183–187 (DTPGH) and 237–240 (NKCD) each bind GTP. A G4 region spans residues 237-240 (NKCD). The interval 273-275 (SAK) is G5.

The protein belongs to the TRAFAC class translation factor GTPase superfamily. Classic translation factor GTPase family. IF-2 subfamily.

The protein localises to the cytoplasm. One of the essential components for the initiation of protein synthesis. Protects formylmethionyl-tRNA from spontaneous hydrolysis and promotes its binding to the 30S ribosomal subunits. Also involved in the hydrolysis of GTP during the formation of the 70S ribosomal complex. The sequence is that of Translation initiation factor IF-2 from Mesoplasma florum (strain ATCC 33453 / NBRC 100688 / NCTC 11704 / L1) (Acholeplasma florum).